We begin with the raw amino-acid sequence, 389 residues long: MNFHEYQSKQLLAEYGIPVPAGKVAATPDEAVEVANSLGNGPWMVKAQIHAGGRGKAGGVKFCKTTDDVKAAAAKMLGTKMSTYQTAGVELPINLVLVTTAGEIVKELYLSILVDRGTKTITYIASSEGGVEIEQVAAETPELIHALNVDFVEGVQGYHGRDFGFKLGLNAKQAGQFASIMVNLYRLFNEKDLALVEINPLAILDDGNLYALDGKFDSDDNAAFRQKQLVAMRDKTQEDETEVTASELDINYVTMDGNIGCMVNGAGLAMATMDVIKLNGGEPANFLDVGGGANKQRVIEAFKLILSSDKVEGIFVNIFGGIVRCDMIAEGIIAAVKEVGVKVPVVVRLEGTNVEEGKQLLRDSGMAIIPADNINDGAKKVVEAVKNAA.

The ATP-grasp domain occupies 9–244 (KQLLAEYGIP…KTQEDETEVT (236 aa)). Residues lysine 46, 53–55 (GRG), glycine 102, and glutamate 107 contribute to the ATP site. Residues asparagine 199 and aspartate 213 each coordinate Mg(2+). Substrate contacts are provided by residues asparagine 264 and 321-323 (GIV).

It belongs to the succinate/malate CoA ligase beta subunit family. In terms of assembly, heterotetramer of two alpha and two beta subunits. The cofactor is Mg(2+).

It carries out the reaction succinate + ATP + CoA = succinyl-CoA + ADP + phosphate. The enzyme catalyses GTP + succinate + CoA = succinyl-CoA + GDP + phosphate. It participates in carbohydrate metabolism; tricarboxylic acid cycle; succinate from succinyl-CoA (ligase route): step 1/1. Succinyl-CoA synthetase functions in the citric acid cycle (TCA), coupling the hydrolysis of succinyl-CoA to the synthesis of either ATP or GTP and thus represents the only step of substrate-level phosphorylation in the TCA. The beta subunit provides nucleotide specificity of the enzyme and binds the substrate succinate, while the binding sites for coenzyme A and phosphate are found in the alpha subunit. This is Succinate--CoA ligase [ADP-forming] subunit beta from Xanthomonas euvesicatoria pv. vesicatoria (strain 85-10) (Xanthomonas campestris pv. vesicatoria).